The primary structure comprises 470 residues: MEFAAENEGKSGGGLHSVAEGVRLSPEPGREGVRDLAGAEEFGGGEEGTGLTGIKEIGDGEEGSGQRPEEIPMDLTVVKQEIIDWPGTEGRLAGQWVEQEVEDRPEVKDENAGVLEVKQETDSSLVVKEAKVGEPEVKEEKVKEEVMDWSEVKEEKDNLEIKQEEKFVGQCIKEELMHGECVKEEKDFLKKEIVDDTKVKEEPPINHPVGCKRKLAMSRCETCGTEEAKYRCPRCMRYSCSLPCVKKHKAELTCNGVRDKTAYISIQQFTEMNLLSDYRFLEDVARTADHISRDAFLKRPISNKYMYFMKNRARRQGINLKLLPNGFTKRKENSTFFDKKKQQFCWHVKLQFPQSQAEYIEKRVPDDKTINEILKPYIDPEKSDPVIRQRLKAYIRSQTGVQILMKIEYMQQNLVRYYELDPYKSLLDNLRNKVIIEYPTLHVVLKGSNNDMKVLHQVKSESTKNVGNEN.

Residues Met1–Glu70 form a disordered region. Residue Ser25 is modified to Phosphoserine. A compositionally biased stretch (gly residues) spans Glu41–Leu51. Residues Lys79, Lys108, Lys118, Lys138, Lys143, Lys153, Lys162, Lys173, Lys183, and Lys200 each participate in a glycyl lysine isopeptide (Lys-Gly) (interchain with G-Cter in SUMO2) cross-link. Positions 220, 223, 232, 235, 240, 244, 248, and 254 each coordinate Zn(2+). An HIT-type zinc finger spans residues Cys220–Cys254. A Glycyl lysine isopeptide (Lys-Gly) (interchain with G-Cter in SUMO2) cross-link involves residue Lys459.

Belongs to the BCD1 family. As to quaternary structure, interacts with FBL, SNU13, NOP58, NUFIP1, RUVBL1, RUVBL2 and TAF9. Interacts (via HIT-type zinc finger) with the RUVBL1/RUVBL2 complex in the presence of ADP.

Functionally, required for box C/D snoRNAs accumulation involved in snoRNA processing, snoRNA transport to the nucleolus and ribosome biogenesis. The chain is Box C/D snoRNA protein 1 (ZNHIT6) from Homo sapiens (Human).